A 261-amino-acid polypeptide reads, in one-letter code: LIM and SH3 domain protein 1 (261 aa).

M1 is modified (N-acetylmethionine). Positions 5–56 constitute an LIM zinc-binding domain; it reads CARCGKIVYPTEKVNCLDKFWHKACFHCETCKMTLNMKNYKGYEKKPYCNAH. An N6-acetyllysine modification is found at K42. Nebulin repeat units lie at residues 61-95 and 97-131; these read SFTM…KNKG and GFSV…KSRM. T68 carries the post-translational modification Phosphothreonine. The residue at position 75 (K75) is an N6-methyllysine. Position 99 is a phosphoserine (S99). Residue T104 is modified to Phosphothreonine. The interval 111–186 is disordered; that stretch reads KKTQDQISNI…QPVAQSYGGY (76 aa). N6-succinyllysine is present on K112. S118 is subject to Phosphoserine. Residues 121-130 show a composition bias toward basic and acidic residues; sequence KYHEEFEKSR. Phosphoserine is present on residues S134 and S146. Low complexity predominate over residues 167–183; sequence SAPVYQQPQQQPVAQSY. The SH3 domain maps to 202–261; that stretch reads GGGKRYRAVYDYSAADEDEVSFQDGDTIVNVQQIDDGWMYGTVERTGDTGMLPANYVEAI.

As to quaternary structure, interacts with F-actin. Interacts with ANKRD54. Interacts with KBTBD10.

The protein resides in the cytoplasm. The protein localises to the cell cortex. Its subcellular location is the cytoskeleton. Functionally, plays an important role in the regulation of dynamic actin-based, cytoskeletal activities. Agonist-dependent changes in LASP1 phosphorylation may also serve to regulate actin-associated ion transport activities, not only in the parietal cell but also in certain other F-actin-rich secretory epithelial cell types. The sequence is that of LIM and SH3 domain protein 1 (LASP1) from Homo sapiens (Human).